A 186-amino-acid polypeptide reads, in one-letter code: Ribosome-recycling factor (186 aa).

This sequence belongs to the RRF family.

It localises to the cytoplasm. Its function is as follows. Responsible for the release of ribosomes from messenger RNA at the termination of protein biosynthesis. May increase the efficiency of translation by recycling ribosomes from one round of translation to another. The protein is Ribosome-recycling factor of Prosthecochloris aestuarii (strain DSM 271 / SK 413).